Consider the following 160-residue polypeptide: Cytochrome b6-f complex subunit 4 (160 aa).

3 consecutive transmembrane segments (helical) span residues 36–56 (LLYVFPIVIMGSFAAIVALAV), 95–115 (LLGVLAMGSVPVGLILVPFIE), and 131–151 (TVFLVGTLVTVWLGIGAALPL).

The protein belongs to the cytochrome b family. PetD subfamily. The 4 large subunits of the cytochrome b6-f complex are cytochrome b6, subunit IV (17 kDa polypeptide, PetD), cytochrome f and the Rieske protein, while the 4 small subunits are PetG, PetL, PetM and PetN. The complex functions as a dimer.

The protein localises to the cellular thylakoid membrane. In terms of biological role, component of the cytochrome b6-f complex, which mediates electron transfer between photosystem II (PSII) and photosystem I (PSI), cyclic electron flow around PSI, and state transitions. The protein is Cytochrome b6-f complex subunit 4 of Nostoc punctiforme (strain ATCC 29133 / PCC 73102).